Here is a 529-residue protein sequence, read N- to C-terminus: Peptide chain release factor 3 (529 aa).

The tr-type G domain maps to 11–280 (AKRRTFAIIS…GLVAWAPAPM (270 aa)). GTP-binding positions include 20–27 (SHPDAGKT), 88–92 (DTPGH), and 142–145 (NKLD).

Belongs to the TRAFAC class translation factor GTPase superfamily. Classic translation factor GTPase family. PrfC subfamily.

Its subcellular location is the cytoplasm. Functionally, increases the formation of ribosomal termination complexes and stimulates activities of RF-1 and RF-2. It binds guanine nucleotides and has strong preference for UGA stop codons. It may interact directly with the ribosome. The stimulation of RF-1 and RF-2 is significantly reduced by GTP and GDP, but not by GMP. This chain is Peptide chain release factor 3, found in Edwardsiella ictaluri (strain 93-146).